A 122-amino-acid chain; its full sequence is Autophagy-related protein 8e (122 aa).

Gly-118 is lipidated: Phosphatidylethanolamine amidated glycine. A propeptide spans 119–122 (ASSI) (removed in mature form).

The protein belongs to the ATG8 family. As to quaternary structure, interacts with ATG4. Interacts with SH3P2. Interacts with ATG1A and ATG11. Binds to ATG1A and ATG11 on autophagic vesicles. The C-terminal 4 residues are removed by ATG4 to expose Gly-118 at the C-terminus. This Gly-118 forms then a thioester bond with the 'Cys-558' of ATG7 (E1-like activating enzyme) before being transferred to the 'Cys-258' of ATG3 (the specific E2 conjugating enzyme), in order to be finally amidated with phosphatidylethanolamine. This lipid modification anchors ATG8 to autophagosomes. As to expression, constitutively expressed.

The protein resides in the cytoplasmic vesicle. It is found in the autophagosome membrane. The protein localises to the vacuole membrane. Its subcellular location is the cytoplasm. It localises to the cytoskeleton. Functionally, ubiquitin-like modifier involved in autophagosomes formation. May mediate the delivery of the autophagosomes to the vacuole via the microtubule cytoskeleton. The polypeptide is Autophagy-related protein 8e (ATG8E) (Arabidopsis thaliana (Mouse-ear cress)).